We begin with the raw amino-acid sequence, 100 residues long: Putative ESAT-6-like protein Y (100 aa).

Belongs to the WXG100 family.

The protein is Putative ESAT-6-like protein Y of Mycobacterium leprae (strain TN).